A 149-amino-acid chain; its full sequence is Deoxyuridine 5'-triphosphate nucleotidohydrolase (149 aa).

Residues 68–70 (RSG), asparagine 81, 85–87 (TID), and lysine 95 each bind substrate.

It belongs to the dUTPase family. Mg(2+) serves as cofactor.

The enzyme catalyses dUTP + H2O = dUMP + diphosphate + H(+). It functions in the pathway pyrimidine metabolism; dUMP biosynthesis; dUMP from dCTP (dUTP route): step 2/2. Functionally, this enzyme is involved in nucleotide metabolism: it produces dUMP, the immediate precursor of thymidine nucleotides and it decreases the intracellular concentration of dUTP so that uracil cannot be incorporated into DNA. The protein is Deoxyuridine 5'-triphosphate nucleotidohydrolase of Bdellovibrio bacteriovorus (strain ATCC 15356 / DSM 50701 / NCIMB 9529 / HD100).